Reading from the N-terminus, the 126-residue chain is Large ribosomal subunit protein uL14m (126 aa).

The protein belongs to the universal ribosomal protein uL14 family. Component of the mitochondrial large ribosomal subunit (mt-LSU). Mature yeast 74S mitochondrial ribosomes consist of a small (37S) and a large (54S) subunit. The 37S small subunit contains a 15S ribosomal RNA (15S mt-rRNA) and at least 32 different proteins. The 54S large subunit contains a 21S rRNA (21S mt-rRNA) and at least 45 different proteins.

The protein resides in the mitochondrion. Component of the mitochondrial ribosome (mitoribosome), a dedicated translation machinery responsible for the synthesis of mitochondrial genome-encoded proteins, including at least some of the essential transmembrane subunits of the mitochondrial respiratory chain. The mitoribosomes are attached to the mitochondrial inner membrane and translation products are cotranslationally integrated into the membrane. This Schizosaccharomyces pombe (strain 972 / ATCC 24843) (Fission yeast) protein is Large ribosomal subunit protein uL14m (mrpl38).